The chain runs to 37 residues: Large ribosomal subunit protein bL36 (37 aa).

It belongs to the bacterial ribosomal protein bL36 family.

The protein is Large ribosomal subunit protein bL36 of Synechococcus sp. (strain RCC307).